The following is a 180-amino-acid chain: Large ribosomal subunit protein uL5 (180 aa).

The protein belongs to the universal ribosomal protein uL5 family. Part of the 50S ribosomal subunit; part of the 5S rRNA/L5/L18/L25 subcomplex. Contacts the 5S rRNA and the P site tRNA. Forms a bridge to the 30S subunit in the 70S ribosome.

Its function is as follows. This is one of the proteins that bind and probably mediate the attachment of the 5S RNA into the large ribosomal subunit, where it forms part of the central protuberance. In the 70S ribosome it contacts protein S13 of the 30S subunit (bridge B1b), connecting the 2 subunits; this bridge is implicated in subunit movement. Contacts the P site tRNA; the 5S rRNA and some of its associated proteins might help stabilize positioning of ribosome-bound tRNAs. The sequence is that of Large ribosomal subunit protein uL5 from Limosilactobacillus fermentum (strain NBRC 3956 / LMG 18251) (Lactobacillus fermentum).